The sequence spans 875 residues: Outer membrane usher protein FocD (875 aa).

The signal sequence occupies residues 1 to 38; sequence MFFGDGGQLLSDKSLTGSAGGGNNRMKFNILPLAFFIG. The cysteines at positions 852 and 874 are disulfide-linked.

It belongs to the fimbrial export usher family.

It localises to the cell outer membrane. In terms of biological role, involved in the export and assembly of the F1C fimbriae subunits across the outer membrane. The protein is Outer membrane usher protein FocD (focD) of Escherichia coli.